We begin with the raw amino-acid sequence, 21 residues long: M-lycotoxin-Ls4a (21 aa).

A Leucine amide modification is found at L21.

In terms of tissue distribution, expressed by the venom gland.

Its subcellular location is the secreted. Its function is as follows. May inhibit growth of bacteria. The protein is M-lycotoxin-Ls4a of Lycosa singoriensis (Wolf spider).